A 3122-amino-acid chain; its full sequence is MPGAAGVLLLLLLSGGLGGVQAQRPQQQRQSQAHQQRGLFPAVLNLASNALITTNATCGEKGPEMYCKLVEHVPGQPVRNPQCRICNQNSSNPNQRHPITNAIDGKNTWWQSPSIKNGIEYHYVTITLDLQQVFQIAYVIVKAANSPRPGNWILERSLDDVEYKPWQYHAVTDTECLTLYNIYPRTGPPSYAKDDEVICTSFYSKIHPLENGEIHISLINGRPSADDPSPELLEFTSARYIRLRFQRIRTLNADLMMFAHKDPREIDPIVTRRYYYSVKDISVGGMCICYGHARACPLDPATNKSRCECEHNTCGDSCDQCCPGFHQKPWRAGTFLTKTECEACNCHGKAEECYYDENVARRNLSLNIRGKYIGGGVCINCTQNTAGINCETCTDGFFRPKGVSPNYPRPCQPCHCDPIGSLNEVCVKDEKHARRGLAPGSCHCKTGFGGVSCDRCARGYTGYPDCKACNCSGLGSKNEDPCFGPCICKENVEGGDCSRCKSGFFNLQEDNWKGCDECFCSGVSNRCQSSYWTYGKIQDMSGWYLTDLPGRIRVAPQQDDLDSPQQISISNAEARQALPHSYYWSAPAPYLGNKLPAVGGQLTFTISYDLEEEEEDTERVLQLMIILEGNDLSISTAQDEVYLHPSEEHTNVLLLKEESFTIHGTHFPVRRKEFMTVLANLKRVLLQITYSFGMDAIFRLSSVNLESAVSYPTDGSIAAAVEVCQCPPGYTGSSCESCWPRHRRVNGTIFGGICEPCQCFGHAESCDDVTGECLNCKDHTGGPYCDKCLPGFYGEPTKGTSEDCQPCACPLNIPSNNFSPTCHLDRSLGLICDGCPVGYTGPRCERCAEGYFGQPSVPGGSCQPCQCNDNLDFSIPGSCDSLSGSCLICKPGTTGRYCELCADGYFGDAVDAKNCQPCRCNAGGSFSEVCHSQTGQCECRANVQGQRCDKCKAGTFGLQSARGCVPCNCNSFGSKSFDCEESGQCWCQPGVTGKKCDRCAHGYFNFQEGGCTACECSHLGNNCDPKTGRCICPPNTIGEKCSKCAPNTWGHSITTGCKACNCSTVGSLDFQCNVNTGQCNCHPKFSGAKCTECSRGHWNYPRCNLCDCFLPGTDATTCDSETKKCSCSDQTGQCTCKVNVEGIHCDRCRPGKFGLDAKNPLGCSSCYCFGTTTQCSEAKGLIRTWVTLKAEQTILPLVDEALQHTTTKGIVFQHPEIVAHMDLMREDLHLEPFYWKLPEQFEGKKLMAYGGKLKYAIYFEAREETGFSTYNPQVIIRGGTPTHARIIVRHMAAPLIGQLTRHEIEMTEKEWKYYGDDPRVHRTVTREDFLDILYDIHYILIKATYGNFMRQSRISEISMEVAEQGRGTTMTPPADLIEKCDCPLGYSGLSCEACLPGFYRLRSQPGGRTPGPTLGTCVPCQCNGHSSLCDPETSICQNCQHHTAGDFCERCALGYYGIVKGLPNDCQQCACPLISSSNNFSPSCVAEGLDDYRCTACPRGYEGQYCERCAPGYTGSPGNPGGSCQECECDPYGSLPVPCDPVTGFCTCRPGATGRKCDGCKHWHAREGWECVFCGDECTGLLLGDLARLEQMVMSINLTGPLPAPYKMLYGLENMTQELKHLLSPQRAPERLIQLAEGNLNTLVTEMNELLTRATKVTADGEQTGQDAERTNTRAKSLGEFIKELARDAEAVNEKAIKLNETLGTRDEAFERNLEGLQKEIDQMIKELRRKNLETQKEIAEDELVAAEALLKKVKKLFGESRGENEEMEKDLREKLADYKNKVDDAWDLLREATDKIREANRLFAVNQKNMTALEKKKEAVESGKRQIENTLKEGNDILDEANRLADEINSIIDYVEDIQTKLPPMSEELNDKIDDLSQEIKDRKLAEKVSQAESHAAQLNDSSAVLDGILDEAKNISFNATAAFKAYSNIKDYIDEAEKVAKEAKDLAHEATKLATGPRGLLKEDAKGCLQKSFRILNEAKKLANDVKENEDHLNGLKTRIENADARNGDLLRTLNDTLGKLSAIPNDTAAKLQAVKDKARQANDTAKDVLAQITELHQNLDGLKKNYNKLADSVAKTNAVVKDPSKNKIIADADATVKNLEQEADRLIDKLKPIKELEDNLKKNISEIKELINQARKQANSIKVSVSSGGDCIRTYKPEIKKGSYNNIVVNVKTAVADNLLFYLGSAKFIDFLAIEMRKGKVSFLWDVGSGVGRVEYPDLTIDDSYWYRIVASRTGRNGTISVRALDGPKASIVPSTHHSTSPPGYTILDVDANAMLFVGGLTGKLKKADAVRVITFTGCMGETYFDNKPIGLWNFREKEGDCKGCTVSPQVEDSEGTIQFDGEGYALVSRPIRWYPNISTVMFKFRTFSSSALLMYLATRDLRDFMSVELTDGHIKVSYDLGSGMASVVSNQNHNDGKWKSFTLSRIQKQANISIVDIDTNQEENIATSSSGNNFGLDLKADDKIYFGGLPTLRNLSMKARPEVNLKKYSGCLKDIEISRTPYNILSSPDYVGVTKGCSLENVYTVSFPKPGFVELSPVPIDVGTEINLSFSTKNESGIILLGSGGTPAPPRRKRRQTGQAYYAILLNRGRLEVHLSTGARTMRKIVIRPEPNLFHDGREHSVHVERTRGIFTVQVDENRRYMQNLTVEQPIEVKKLFVGGAPPEFQPSPLRNIPPFEGCIWNLVINSVPMDFARPVSFKNADIGRCAHQKLREDEDGAAPAEIVIQPEPVPTPAFPTPTPVLTHGPCAAESEPALLIGSKQFGLSRNSHIAIAFDDTKVKNRLTIELEVRTEAESGLLFYMARINHADFATVQLRNGLPYFSYDLGSGDTHTMIPTKINDGQWHKIKIMRSKQEGILYVDGASNRTISPKKADILDVVGMLYVGGLPINYTTRRIGPVTYSIDGCVRNLHMAEAPADLEQPTSSFHVGTCFANAQRGTYFDGTGFAKAVGGFKVGLDLLVEFEFRTTTTTGVLLGISSQKMDGMGIEMIDEKLMFHVDNGAGRFTAVYDAGVPGHLCDGQWHKVTANKIKHRIELTVDGNQVEAQSPNPASTSADTNDPVFVGGFPDDLKQFGLTTSIPFRGCIRSLKLTKGTGKPLEVNFAKALELRGVQPVSCPAN.

Residues 1-22 form the signal peptide; the sequence is MPGAAGVLLLLLLSGGLGGVQA. The Laminin N-terminal domain maps to 35 to 286; that stretch reads QQRGLFPAVL…SVKDISVGGM (252 aa). Residues Asn55 and Asn89 are each glycosylated (N-linked (GlcNAc...) asparagine). Disulfide bonds link Cys287–Cys296, Cys289–Cys307, Cys309–Cys318, Cys321–Cys341, Cys344–Cys353, and Cys346–Cys378. Laminin EGF-like domains lie at 287–343, 344–413, 414–468, and 469–517; these read CICY…ECEA, CNCH…PCQP, CHCD…DCKA, and CNCS…GCDE. N-linked (GlcNAc...) asparagine glycosylation is present at Asn303. Asn363 and Asn380 each carry an N-linked (GlcNAc...) asparagine glycan. Cystine bridges form between Cys381–Cys390, Cys393–Cys411, Cys414–Cys426, Cys416–Cys442, Cys444–Cys453, Cys456–Cys466, Cys469–Cys482, Cys471–Cys486, Cys488–Cys497, and Cys500–Cys515. Asn470 carries N-linked (GlcNAc...) asparagine glycosylation. Residues 518 to 527 form the Laminin EGF-like 5; first part domain; that stretch reads CFCSGVSNRC. Positions 531 to 723 constitute a Laminin IV type A 1 domain; sequence YWTYGKIQDM…DGSIAAAVEV (193 aa). A Laminin EGF-like 5; second part domain is found at 724–756; it reads CQCPPGYTGSSCESCWPRHRRVNGTIFGGICEP. An N-linked (GlcNAc...) asparagine glycan is attached at Asn746. 32 disulfides stabilise this stretch: Cys757-Cys766, Cys759-Cys773, Cys776-Cys785, Cys788-Cys804, Cys807-Cys822, Cys809-Cys832, Cys835-Cys844, Cys847-Cys862, Cys865-Cys879, Cys867-Cys886, Cys889-Cys898, Cys901-Cys915, Cys918-Cys930, Cys920-Cys937, Cys939-Cys948, Cys951-Cys964, Cys967-Cys979, Cys969-Cys985, Cys987-Cys996, Cys999-Cys1011, Cys1014-Cys1023, Cys1016-Cys1030, Cys1032-Cys1041, Cys1044-Cys1057, Cys1060-Cys1072, Cys1062-Cys1079, Cys1081-Cys1090, Cys1093-Cys1103, Cys1106-Cys1118, Cys1108-Cys1134, Cys1136-Cys1145, and Cys1148-Cys1163. Laminin EGF-like domains are found at residues 757-806, 807-864, 865-917, 918-966, 967-1013, 1014-1059, 1060-1105, and 1106-1165; these read CQCF…DCQP, CACP…SCQP, CQCN…NCQP, CRCN…GCVP, CNCN…GCTA, CECS…GCKA, CNCS…RCNL, and CDCF…GCSS. Asn1061 carries N-linked (GlcNAc...) asparagine glycosylation. Residues 1166 to 1175 enclose the Laminin EGF-like 14; first part domain; that stretch reads CYCFGTTTQC. The Laminin IV type A 2 domain occupies 1176 to 1379; the sequence is SEAKGLIRTW…MTPPADLIEK (204 aa). In terms of domain architecture, Laminin EGF-like 14; second part spans 1380–1419; it reads CDCPLGYSGLSCEACLPGFYRLRSQPGGRTPGPTLGTCVP. 12 disulfide bridges follow: Cys1420/Cys1429, Cys1422/Cys1436, Cys1439/Cys1448, Cys1451/Cys1466, Cys1469/Cys1484, Cys1471/Cys1494, Cys1497/Cys1506, Cys1509/Cys1524, Cys1527/Cys1539, Cys1529/Cys1546, Cys1548/Cys1557, and Cys1560/Cys1571. Laminin EGF-like domains are found at residues 1420-1468, 1469-1526, and 1527-1573; these read CQCN…DCQQ, CACP…SCQE, and CECD…ECVF. The interval 1574-2144 is domain II and I; it reads CGDECTGLLL…NQARKQANSI (571 aa). 12 N-linked (GlcNAc...) asparagine glycosylation sites follow: Asn1597, Asn1614, Asn1700, Asn1810, Asn1901, Asn1916, Asn1920, Asn2017, Asn2028, Asn2045, Asn2126, and Asn2240. Positions 1630 to 2150 form a coiled coil; that stretch reads ERLIQLAEGN…ANSIKVSVSS (521 aa). 5 consecutive Laminin G-like domains span residues 2145-2328, 2340-2521, 2526-2710, 2763-2934, and 2939-3110; these read KVSV…CKGC, TIQF…TKGC, VYTV…IGRC, SKQF…VGTC, and QRGT…KALE. Cys2302 and Cys2328 are disulfide-bonded. Asn2360, Asn2435, and Asn2478 each carry an N-linked (GlcNAc...) asparagine glycan. The cysteines at positions 2495 and 2521 are disulfide-linked. N-linked (GlcNAc...) asparagine glycosylation is found at Asn2551, Asn2558, and Asn2648. Residues Cys2683 and Cys2710 are joined by a disulfide bond. Residues Asn2868 and Asn2893 are each glycosylated (N-linked (GlcNAc...) asparagine). Cys2909 and Cys2934 form a disulfide bridge. A compositionally biased stretch (polar residues) spans 3043–3060; sequence GNQVEAQSPNPASTSADT. The segment at 3043–3063 is disordered; it reads GNQVEAQSPNPASTSADTNDP.

As to quaternary structure, laminin is a complex glycoprotein, consisting of three different polypeptide chains (alpha, beta, gamma), which are bound to each other by disulfide bonds into a cross-shaped molecule comprising one long and three short arms with globules at each end. Alpha-2 is a subunit of laminin-2 (laminin-211 or merosin), laminin-4 (laminin-221 or S-merosin) and laminin-12 (laminin-213). Interacts with FBLN1, FBLN2 and NID2. As to expression, placenta, striated muscle, peripheral nerve, cardiac muscle, pancreas, lung, spleen, kidney, adrenal gland, skin, testis, meninges, choroid plexus, and some other regions of the brain; not in liver, thymus and bone.

Its subcellular location is the secreted. It localises to the extracellular space. It is found in the extracellular matrix. The protein localises to the basement membrane. In terms of biological role, binding to cells via a high affinity receptor, laminin is thought to mediate the attachment, migration and organization of cells into tissues during embryonic development by interacting with other extracellular matrix components. This Homo sapiens (Human) protein is Laminin subunit alpha-2 (LAMA2).